Reading from the N-terminus, the 204-residue chain is Large ribosomal subunit protein bL25 (204 aa).

The protein belongs to the bacterial ribosomal protein bL25 family. CTC subfamily. As to quaternary structure, part of the 50S ribosomal subunit; part of the 5S rRNA/L5/L18/L25 subcomplex. Contacts the 5S rRNA. Binds to the 5S rRNA independently of L5 and L18.

Functionally, this is one of the proteins that binds to the 5S RNA in the ribosome where it forms part of the central protuberance. The protein is Large ribosomal subunit protein bL25 of Pseudomonas syringae pv. syringae (strain B728a).